The chain runs to 136 residues: MARTKQTARKSTGGKAPRKALATKAARKSAIVTGSVKKVHRFRPGTVALREIRRYQKSTELLLRKLPFQRLVREIAQDFKTDLRFQSAAIGALQEASEAYLVGLFEDTNLCAIHAKRVTIMPKDMQLARRIRGERS.

The disordered stretch occupies residues methionine 1–alanine 20. N6-acetyllysine; alternate occurs at positions 5 and 10. Residues lysine 5 and lysine 10 each carry the N6-methylated lysine; alternate modification. Serine 11 is subject to Phosphoserine. N6-acetyllysine occurs at positions 15 and 24. Lysine 28 is modified (N6-methylated lysine). Serine 29 is subject to Phosphoserine. 2 positions are modified to N6-methylated lysine: lysine 37 and lysine 80.

This sequence belongs to the histone H3 family. The nucleosome is a histone octamer containing two molecules each of H2A, H2B, H3 and H4 assembled in one H3-H4 heterotetramer and two H2A-H2B heterodimers. The octamer wraps approximately 147 bp of DNA. Acetylation is generally linked to gene activation. Post-translationally, methylation at Lys-5 is linked to gene activation. Methylation at Lys-10 is linked to gene repression.

It localises to the nucleus. The protein localises to the chromosome. Functionally, putative variant histone H3 which may replace conventional H3 in a subset of nucleosomes. Nucleosomes wrap and compact DNA into chromatin, limiting DNA accessibility to the cellular machineries which require DNA as a template. Histones thereby play a central role in transcription regulation, DNA repair, DNA replication and chromosomal stability. DNA accessibility is regulated via a complex set of post-translational modifications of histones, also called histone code, and nucleosome remodeling. This chain is Histone H3.3-like type 2 (his-74), found in Caenorhabditis elegans.